The chain runs to 379 residues: Cobalt-precorrin-5B C(1)-methyltransferase (379 aa).

This sequence belongs to the CbiD family.

The enzyme catalyses Co-precorrin-5B + S-adenosyl-L-methionine = Co-precorrin-6A + S-adenosyl-L-homocysteine. It functions in the pathway cofactor biosynthesis; adenosylcobalamin biosynthesis; cob(II)yrinate a,c-diamide from sirohydrochlorin (anaerobic route): step 6/10. Its function is as follows. Catalyzes the methylation of C-1 in cobalt-precorrin-5B to form cobalt-precorrin-6A. This Salmonella choleraesuis (strain SC-B67) protein is Cobalt-precorrin-5B C(1)-methyltransferase.